The primary structure comprises 312 residues: Malate dehydrogenase (312 aa).

Residues 7–13 (GAAGGIG) and Asp-34 contribute to the NAD(+) site. Residues Arg-81 and Arg-87 each contribute to the substrate site. NAD(+) is bound by residues Asn-94 and 117–119 (ITN). Asn-119 and Arg-153 together coordinate substrate. The active-site Proton acceptor is the His-177. Met-227 is an NAD(+) binding site.

This sequence belongs to the LDH/MDH superfamily. MDH type 1 family. Homodimer.

It catalyses the reaction (S)-malate + NAD(+) = oxaloacetate + NADH + H(+). Catalyzes the reversible oxidation of malate to oxaloacetate. This is Malate dehydrogenase from Cronobacter sakazakii (strain ATCC BAA-894) (Enterobacter sakazakii).